Consider the following 133-residue polypeptide: Small ribosomal subunit protein uS9 (133 aa).

Residues 114–133 are disordered; sequence VERKKYGKKKARRSPQFSKR. The segment covering 118–133 has biased composition (basic residues); sequence KYGKKKARRSPQFSKR.

The protein belongs to the universal ribosomal protein uS9 family.

The chain is Small ribosomal subunit protein uS9 from Fusobacterium nucleatum subsp. nucleatum (strain ATCC 25586 / DSM 15643 / BCRC 10681 / CIP 101130 / JCM 8532 / KCTC 2640 / LMG 13131 / VPI 4355).